A 432-amino-acid chain; its full sequence is RNA binding protein fox-1 homolog 2 (432 aa).

Positions 1-21 (MAEGGQAQQQPPQLGPGAAAR) are enriched in low complexity. The interval 1 to 169 (MAEGGQAQQQ…STPKRLHVSN (169 aa)) is disordered. Polar residues-rich tracts occupy residues 60-69 (QGNQEPTTTP) and 101-121 (YAGQ…PHGE). Residues 122–159 (QSSNSPSNQNGSLTQTEGGAQTDGQQSQTQSSENSESK) are compositionally biased toward low complexity. Residues 163-239 (KRLHVSNIPF…RKIEVNNATA (77 aa)) form the RRM domain. R323 carries the omega-N-methylarginine modification. Asymmetric dimethylarginine occurs at positions 339 and 371. 2 positions are modified to asymmetric dimethylarginine; alternate: R423 and R428. R423 and R428 each carry omega-N-methylarginine; alternate.

Interacts with ER-alpha N-terminal activation domain. Interacts with RBPMS; the interaction allows cooperative assembly of stable cell-specific alternative splicing regulatory complexes.

It localises to the nucleus. Its subcellular location is the cytoplasm. In terms of biological role, RNA-binding protein that regulates alternative splicing events by binding to 5'-UGCAUGU-3' elements. Prevents binding of U2AF2 to the 3'-splice site. Regulates alternative splicing of tissue-specific exons and of differentially spliced exons during erythropoiesis. Seems to act as a coregulatory factor of ER-alpha. Together with RNA binding proteins RBPMS and MBNL1/2, activates vascular smooth muscle cells alternative splicing events. The polypeptide is RNA binding protein fox-1 homolog 2 (Rbfox2) (Rattus norvegicus (Rat)).